The primary structure comprises 145 residues: Transcriptional regulator SlyA (145 aa).

The region spanning 2 to 135 (ELPLGSDLAR…LALLVSRLEK (134 aa)) is the HTH marR-type domain. The H-T-H motif DNA-binding region spans 49–72 (QIQLAKAIGIEQPSLVRTLDQLEE).

The protein belongs to the SlyA family. Homodimer.

Functionally, transcription regulator that can specifically activate or repress expression of target genes. Regulates genes involved in production of antibiotic and exoenzyme virulence determinants in the phytopathogen. Required for the expression of the virulence protein evf during Drosophila melanogaster infection. This chain is Transcriptional regulator SlyA, found in Pectobacterium carotovorum subsp. carotovorum (Erwinia carotovora subsp. carotovora).